A 325-amino-acid polypeptide reads, in one-letter code: NADH-quinone oxidoreductase subunit H (325 aa).

A run of 8 helical transmembrane segments spans residues 11–31 (ILLTVLKAVVILLVVVTCGAF), 81–101 (VIFTLAPMIAFTSLLLAFAIV), 114–134 (IGILFFLMMAGLAVYAVLFAG), 154–174 (LSYEVFLGLSLMGVVAQAGSF), 186–206 (VWNVIPQFFGFITFAIAGVAV), 237–257 (FFVGEYIGIVTISALMVTLFF), 265–285 (LPPFIWFALKTAFFMMMFILI), and 304–324 (ICLPLTLINLLVTAAVILWQA).

The protein belongs to the complex I subunit 1 family. In terms of assembly, NDH-1 is composed of 13 different subunits. Subunits NuoA, H, J, K, L, M, N constitute the membrane sector of the complex.

It localises to the cell inner membrane. It carries out the reaction a quinone + NADH + 5 H(+)(in) = a quinol + NAD(+) + 4 H(+)(out). Functionally, NDH-1 shuttles electrons from NADH, via FMN and iron-sulfur (Fe-S) centers, to quinones in the respiratory chain. The immediate electron acceptor for the enzyme in this species is believed to be ubiquinone. Couples the redox reaction to proton translocation (for every two electrons transferred, four hydrogen ions are translocated across the cytoplasmic membrane), and thus conserves the redox energy in a proton gradient. This subunit may bind ubiquinone. The sequence is that of NADH-quinone oxidoreductase subunit H from Escherichia coli O45:K1 (strain S88 / ExPEC).